The primary structure comprises 289 residues: Ribosomal RNA small subunit methyltransferase I (289 aa).

Belongs to the methyltransferase superfamily. RsmI family.

Its subcellular location is the cytoplasm. It carries out the reaction cytidine(1402) in 16S rRNA + S-adenosyl-L-methionine = 2'-O-methylcytidine(1402) in 16S rRNA + S-adenosyl-L-homocysteine + H(+). In terms of biological role, catalyzes the 2'-O-methylation of the ribose of cytidine 1402 (C1402) in 16S rRNA. The polypeptide is Ribosomal RNA small subunit methyltransferase I (Helicobacter pylori (strain J99 / ATCC 700824) (Campylobacter pylori J99)).